A 628-amino-acid chain; its full sequence is Biosynthetic arginine decarboxylase (628 aa).

Position 99 is an N6-(pyridoxal phosphate)lysine (Lys99). Residue 279-289 participates in substrate binding; the sequence is VDVGGGLGIDY.

Belongs to the Orn/Lys/Arg decarboxylase class-II family. SpeA subfamily. It depends on Mg(2+) as a cofactor. The cofactor is pyridoxal 5'-phosphate.

The catalysed reaction is L-arginine + H(+) = agmatine + CO2. Its function is as follows. Catalyzes the biosynthesis of agmatine from arginine. This chain is Biosynthetic arginine decarboxylase, found in Xanthomonas campestris pv. campestris (strain ATCC 33913 / DSM 3586 / NCPPB 528 / LMG 568 / P 25).